A 512-amino-acid polypeptide reads, in one-letter code: Histidine ammonia-lyase (512 aa).

The 5-imidazolinone (Cys-Gly) cross-link spans 143-145 (CSG). S144 carries the 2,3-didehydroalanine (Ser) modification.

The protein belongs to the PAL/histidase family. Post-translationally, contains an active site 4-methylidene-imidazol-5-one (MIO), which is formed autocatalytically by cyclization and dehydration of residues Cys-Ser-Gly.

The protein localises to the cytoplasm. The catalysed reaction is L-histidine = trans-urocanate + NH4(+). The protein operates within amino-acid degradation; L-histidine degradation into L-glutamate; N-formimidoyl-L-glutamate from L-histidine: step 1/3. The protein is Histidine ammonia-lyase of Streptomyces coelicolor (strain ATCC BAA-471 / A3(2) / M145).